Consider the following 562-residue polypeptide: Actin-related protein 8 (562 aa).

248–251 (DVGD) provides a ligand contact to ATP.

This sequence belongs to the actin family. ARP8 subfamily. In terms of assembly, component of the chromatin remodeling Ino80 complex. Exists as monomers and dimers, but the dimer is most probably the biologically relevant form required for stable interactions with histones that exploits the twofold symmetry of the nucleosome core.

The protein localises to the nucleus. Functionally, plays an important role in the functional organization of mitotic chromosomes. Exhibits low basal ATPase activity, and unable to polymerize. Proposed core component of the chromatin remodeling INO80 complex which is involved in transcriptional regulation, DNA replication and probably DNA repair. Strongly prefer nucleosomes and H3-H4 tetramers over H2A-H2B dimers, suggesting it may act as a nucleosome recognition module within the complex. The protein is Actin-related protein 8 of Aedes aegypti (Yellowfever mosquito).